The following is a 556-amino-acid chain: Formate--tetrahydrofolate ligase (556 aa).

65–72 (TPAGEGKS) is a binding site for ATP.

Belongs to the formate--tetrahydrofolate ligase family.

The catalysed reaction is (6S)-5,6,7,8-tetrahydrofolate + formate + ATP = (6R)-10-formyltetrahydrofolate + ADP + phosphate. It participates in one-carbon metabolism; tetrahydrofolate interconversion. In Clostridium perfringens (strain ATCC 13124 / DSM 756 / JCM 1290 / NCIMB 6125 / NCTC 8237 / Type A), this protein is Formate--tetrahydrofolate ligase.